The primary structure comprises 321 residues: 5,10-methylenetetrahydromethanopterin reductase (321 aa).

This sequence belongs to the mer family.

The protein resides in the cytoplasm. The catalysed reaction is 5-methyl-5,6,7,8-tetrahydromethanopterin + oxidized coenzyme F420-(gamma-L-Glu)(n) + H(+) = 5,10-methylenetetrahydromethanopterin + reduced coenzyme F420-(gamma-L-Glu)(n). The protein operates within one-carbon metabolism; methanogenesis from CO(2); methyl-coenzyme M from 5,10-methylene-5,6,7,8-tetrahydromethanopterin: step 1/2. In terms of biological role, catalyzes the reversible reduction of methylene-H(4)MPT to methyl-H(4)MPT. The polypeptide is 5,10-methylenetetrahydromethanopterin reductase (Methanothermobacter thermautotrophicus (strain ATCC 29096 / DSM 1053 / JCM 10044 / NBRC 100330 / Delta H) (Methanobacterium thermoautotrophicum)).